Here is a 245-residue protein sequence, read N- to C-terminus: Small ribosomal subunit protein uS2 (245 aa).

The protein belongs to the universal ribosomal protein uS2 family.

This chain is Small ribosomal subunit protein uS2, found in Pseudomonas putida (strain GB-1).